The sequence spans 514 residues: 23S rRNA (uracil(1939)-C(5))-methyltransferase RlmD (514 aa).

Residues Cys70, Cys76, Cys79, and Cys158 each coordinate [4Fe-4S] cluster. S-adenosyl-L-methionine-binding residues include Gln272, Phe301, Asn306, Glu322, Asn350, and Asp371. The active-site Nucleophile is Cys398.

The protein belongs to the class I-like SAM-binding methyltransferase superfamily. RNA M5U methyltransferase family. RlmD subfamily.

It carries out the reaction uridine(1939) in 23S rRNA + S-adenosyl-L-methionine = 5-methyluridine(1939) in 23S rRNA + S-adenosyl-L-homocysteine + H(+). In terms of biological role, catalyzes the formation of 5-methyl-uridine at position 1939 (m5U1939) in 23S rRNA. In Chromobacterium violaceum (strain ATCC 12472 / DSM 30191 / JCM 1249 / CCUG 213 / NBRC 12614 / NCIMB 9131 / NCTC 9757 / MK), this protein is 23S rRNA (uracil(1939)-C(5))-methyltransferase RlmD.